Reading from the N-terminus, the 1040-residue chain is Multidrug resistance protein MdtB (1040 aa).

Helical transmembrane passes span 25–45, 347–367, 369–389, 396–416, 440–460, 472–492, 537–557, 863–883, 888–908, 910–930, 968–988, and 998–1018; these read LLMA…PVAA, LMLA…NIPA, IIPG…MVFL, LTLM…IVVI, IGFT…PLLF, FAVT…TLTP, WLTL…WIVI, LGST…VLGV, FIHP…ALLA, IIAG…LIGI, ILMT…STGV, and IAMV…TPVI.

This sequence belongs to the resistance-nodulation-cell division (RND) (TC 2.A.6) family. MdtB subfamily. In terms of assembly, part of a tripartite efflux system composed of MdtA, MdtB and MdtC. MdtB forms a heteromultimer with MdtC.

It localises to the cell inner membrane. This chain is Multidrug resistance protein MdtB, found in Salmonella agona (strain SL483).